The chain runs to 352 residues: ATP synthase subunit a 2 (352 aa).

The N-terminal stretch at 1–26 (MRKKAISRILALVVPVLLSLNSQAFA) is a signal peptide. A run of 7 helical transmembrane segments spans residues 112–132 (VVMI…AGAS), 172–192 (FLPY…LGLI), 195–215 (GATA…TFVI), 232–252 (HLTA…EILG), 264–284 (LFAN…ISFI), 289–309 (IVAV…ELFV), and 310–330 (AFLQ…LATA).

Belongs to the ATPase A chain family. In terms of assembly, F-type ATPases have 2 components, CF(1) - the catalytic core - and CF(0) - the membrane proton channel. CF(1) has five subunits: alpha(3), beta(3), gamma(1), delta(1), epsilon(1). CF(0) has four main subunits: a, b, b' and c.

It localises to the cell inner membrane. In terms of biological role, key component of the proton channel; it plays a direct role in the translocation of protons across the membrane. The polypeptide is ATP synthase subunit a 2 (Chlorobaculum tepidum (strain ATCC 49652 / DSM 12025 / NBRC 103806 / TLS) (Chlorobium tepidum)).